We begin with the raw amino-acid sequence, 290 residues long: CTP-dependent diacylglycerol kinase 1 (290 aa).

A disordered region spans residues Met-1–Ala-33. Residues Met-1–Lys-77 are Lumenal-facing. A glycan (N-linked (GlcNAc...) asparagine) is linked at Asn-11. A compositionally biased stretch (polar residues) spans Arg-23–Ala-33. A phosphoserine mark is found at Ser-44, Ser-45, and Ser-46. A helical transmembrane segment spans residues Val-78–Ile-95. At Asn-96 to Pro-103 the chain is on the cytoplasmic side. A helical transmembrane segment spans residues Leu-104–Phe-124. Residues Asn-125 to Glu-140 lie on the Lumenal side of the membrane. The helical transmembrane segment at Ile-141–Phe-161 threads the bilayer. The Cytoplasmic segment spans residues Ser-162–Lys-163. Residues Asp-164 to Gly-184 form a helical membrane-spanning segment. The Lumenal portion of the chain corresponds to Arg-185–Ser-203. Asn-197 is a glycosylation site (N-linked (GlcNAc...) asparagine). The helical transmembrane segment at Ile-204–Ala-224 threads the bilayer. Residues Tyr-225–Ser-244 are Cytoplasmic-facing. Residues Leu-245–Phe-265 traverse the membrane as a helical segment. The Lumenal segment spans residues Asn-266–Lys-290. Residue Asn-270 is glycosylated (N-linked (GlcNAc...) asparagine).

It belongs to the DGK1 family. Ca(2+) is required as a cofactor. Requires Mg(2+) as cofactor. CKII-mediated phosphorylation of Ser-45 and Ser-46 regulates its function in the production of PA.

The protein localises to the endoplasmic reticulum membrane. The protein resides in the nucleus membrane. It carries out the reaction a 1,2-diacyl-sn-glycerol + CTP = a 1,2-diacyl-sn-glycero-3-phosphate + CDP + H(+). It catalyses the reaction 1,2-di-(9Z-octadecenoyl)-sn-glycerol + CTP = 1,2-di-(9Z-octadecenoyl)-sn-glycero-3-phosphate + CDP + H(+). Inhibited by N-ethylmaleimide, dCTP, and sphingoid bases including sphinganine, sphingosine and phytosphingosine. DAG pyrophosphate, cardiolipin, CDP-DAG, and lyso-PA inhibited activity by 23-66%. Also inhibited by Ca(2+) concentrations of more than 1 mM, by addition of EDTA or EGTA at 5 mM, and by 5 mM Mn(2+) and Zn(2+). Stimulated by major membrane phospholipids including phosphatidylcholine, phosphatidylethanolamine, phosphatidylinositol, phosphatidylserine, phosphatidylglycerol, and phosphatidate. Also stimulated to a maximum by addition of TritonX-100 at a concentration of 1 mM, followed by an apparent inhibition of activity at concentrations above 1 mM. CTP-dependent diacylglycerol kinase that catalyzes the phosphorylation of diacylglycerol (DAG) to phosphatidate (PA). Controls phosphatidate levels at the nuclear envelope. Counteracts the activity of PA phosphatase PAH1/SMP2, controlling the levels of PA and DAG for the synthesis of triacylglycerol and membrane phospholipids. May be involved in vesicle trafficking between the endoplasmic reticulum and the Golgi apparatus. Required to convert triacylglycerol-derived DAG to PA for phospholipid synthesis during growth resumption from stationary phase in the absence of de novo fatty acid synthesis. Involved in the resistance to nickel chloride and nalidixic acid. In Saccharomyces cerevisiae (strain ATCC 204508 / S288c) (Baker's yeast), this protein is CTP-dependent diacylglycerol kinase 1 (DGK1).